Consider the following 474-residue polypeptide: Sugar transporter ERD6-like 17 (474 aa).

Helical transmembrane passes span 27-47 (ITAC…SFGV), 76-96 (FATL…MVIG), 106-126 (FLCI…LLNF), 129-149 (IISG…IAEI), 159-180 (TFSN…GNFI), 184-204 (TLAL…FFVP), 266-286 (TLVV…AAVI), 302-322 (IGTT…LILV), 329-349 (PLLM…GVAF), 363-383 (ILSF…LGGL), 403-423 (IVTL…NFLF), and 429-449 (GTFF…WLLV).

The protein belongs to the major facilitator superfamily. Sugar transporter (TC 2.A.1.1) family. Expressed in young seedlings.

Its subcellular location is the membrane. Functionally, sugar transporter. The chain is Sugar transporter ERD6-like 17 from Arabidopsis thaliana (Mouse-ear cress).